The following is a 394-amino-acid chain: Acetyl-CoA acetyltransferase (394 aa).

Cys89 (acyl-thioester intermediate) is an active-site residue. Residues His350 and Cys380 each act as proton acceptor in the active site.

It belongs to the thiolase-like superfamily. Thiolase family. As to quaternary structure, homotetramer.

It is found in the cytoplasm. The catalysed reaction is 2 acetyl-CoA = acetoacetyl-CoA + CoA. The protein operates within biopolymer metabolism; poly-(R)-3-hydroxybutanoate biosynthesis. It participates in metabolic intermediate biosynthesis; (R)-mevalonate biosynthesis; (R)-mevalonate from acetyl-CoA: step 1/3. The sequence is that of Acetyl-CoA acetyltransferase from Allochromatium vinosum (strain ATCC 17899 / DSM 180 / NBRC 103801 / NCIMB 10441 / D) (Chromatium vinosum).